The sequence spans 125 residues: Fluoride-specific ion channel FluC (125 aa).

A run of 4 helical transmembrane segments spans residues 1–21 (MFAT…ARYG), 34–54 (FPWA…FLFF), 72–92 (TGGL…LVLF), and 101–121 (LLYM…GAWI). Residues Gly-76 and Thr-79 each contribute to the Na(+) site.

Belongs to the fluoride channel Fluc/FEX (TC 1.A.43) family.

The protein resides in the cell inner membrane. The catalysed reaction is fluoride(in) = fluoride(out). Na(+) is not transported, but it plays an essential structural role and its presence is essential for fluoride channel function. Functionally, fluoride-specific ion channel. Important for reducing fluoride concentration in the cell, thus reducing its toxicity. This chain is Fluoride-specific ion channel FluC, found in Acidithiobacillus ferrooxidans (strain ATCC 23270 / DSM 14882 / CIP 104768 / NCIMB 8455) (Ferrobacillus ferrooxidans (strain ATCC 23270)).